The primary structure comprises 200 residues: NAD(P)H dehydrogenase (quinone) (200 aa).

Residues 4-191 (VLVLYYSMYG…DIARFQGKHV (188 aa)) form the Flavodoxin-like domain. FMN is bound by residues 10–15 (SMYGHI) and 79–81 (TRF). Position 12 (Tyr12) interacts with NAD(+). Residue Trp99 participates in substrate binding. FMN-binding positions include 114–120 (STGTQHG) and His135.

This sequence belongs to the WrbA family. FMN serves as cofactor.

It carries out the reaction a quinone + NADH + H(+) = a quinol + NAD(+). The catalysed reaction is a quinone + NADPH + H(+) = a quinol + NADP(+). This chain is NAD(P)H dehydrogenase (quinone), found in Paraburkholderia phytofirmans (strain DSM 17436 / LMG 22146 / PsJN) (Burkholderia phytofirmans).